A 476-amino-acid polypeptide reads, in one-letter code: Aspartyl/glutamyl-tRNA(Asn/Gln) amidotransferase subunit B (476 aa).

It belongs to the GatB/GatE family. GatB subfamily. In terms of assembly, heterotrimer of A, B and C subunits.

The catalysed reaction is L-glutamyl-tRNA(Gln) + L-glutamine + ATP + H2O = L-glutaminyl-tRNA(Gln) + L-glutamate + ADP + phosphate + H(+). It catalyses the reaction L-aspartyl-tRNA(Asn) + L-glutamine + ATP + H2O = L-asparaginyl-tRNA(Asn) + L-glutamate + ADP + phosphate + 2 H(+). Its function is as follows. Allows the formation of correctly charged Asn-tRNA(Asn) or Gln-tRNA(Gln) through the transamidation of misacylated Asp-tRNA(Asn) or Glu-tRNA(Gln) in organisms which lack either or both of asparaginyl-tRNA or glutaminyl-tRNA synthetases. The reaction takes place in the presence of glutamine and ATP through an activated phospho-Asp-tRNA(Asn) or phospho-Glu-tRNA(Gln). This is Aspartyl/glutamyl-tRNA(Asn/Gln) amidotransferase subunit B from Bacillus pumilus (strain SAFR-032).